A 121-amino-acid chain; its full sequence is Autophagy-related protein 8f (121 aa).

Residue Gly-117 is the site of Phosphatidylethanolamine amidated glycine attachment. Residues Phe-118 to Pro-121 constitute a propeptide, removed in mature form.

It belongs to the ATG8 family. As to quaternary structure, interacts with ATG4. Interacts with NBR1. Interacts with ATI1 and ATI2. Interacts with SH3P2. In terms of processing, the C-terminal 4 residues are removed by ATG4 to expose Gly-117 at the C-terminus. This Gly-117 forms then a thioester bond with the 'Cys-558' of ATG7 (E1-like activating enzyme) before being transferred to the 'Cys-258' of ATG3 (the specific E2 conjugating enzyme), in order to be finally amidated with phosphatidylethanolamine. This lipid modification anchors ATG8 to autophagosomes. In terms of tissue distribution, constitutively expressed.

It is found in the cytoplasmic vesicle. Its subcellular location is the autophagosome membrane. The protein localises to the vacuole membrane. The protein resides in the cytoplasm. It localises to the cytoskeleton. Functionally, ubiquitin-like modifier involved in autophagosomes formation. May mediate the delivery of the autophagosomes to the vacuole via the microtubule cytoskeleton. The sequence is that of Autophagy-related protein 8f (ATG8F) from Arabidopsis thaliana (Mouse-ear cress).